We begin with the raw amino-acid sequence, 276 residues long: Diaminopimelate epimerase (276 aa).

Substrate-binding residues include Asn13, Gln46, and Asn66. Catalysis depends on Cys75, which acts as the Proton donor. Residues 76–77, Asn159, Asn192, and 210–211 contribute to the substrate site; these read GN and ER. The active-site Proton acceptor is Cys219. 220–221 serves as a coordination point for substrate; sequence GS.

Belongs to the diaminopimelate epimerase family. As to quaternary structure, homodimer.

It localises to the cytoplasm. The catalysed reaction is (2S,6S)-2,6-diaminopimelate = meso-2,6-diaminopimelate. The protein operates within amino-acid biosynthesis; L-lysine biosynthesis via DAP pathway; DL-2,6-diaminopimelate from LL-2,6-diaminopimelate: step 1/1. Functionally, catalyzes the stereoinversion of LL-2,6-diaminopimelate (L,L-DAP) to meso-diaminopimelate (meso-DAP), a precursor of L-lysine and an essential component of the bacterial peptidoglycan. This Vibrio atlanticus (strain LGP32) (Vibrio splendidus (strain Mel32)) protein is Diaminopimelate epimerase.